The chain runs to 386 residues: Antilisterial bacteriocin subtilosin biosynthesis protein AlbE (386 aa).

Involved in the production of the bacteriocin subtilosin. The protein is Antilisterial bacteriocin subtilosin biosynthesis protein AlbE (albE) of Bacillus subtilis.